We begin with the raw amino-acid sequence, 388 residues long: Galactokinase (388 aa).

33-36 (EHTD) is a substrate binding site. Residues S67 and 125–131 (GSGLSSS) contribute to the ATP site. Mg(2+) is bound by residues S131 and E163. D175 acts as the Proton acceptor in catalysis. Substrate is bound at residue Y225.

It belongs to the GHMP kinase family. GalK subfamily.

The protein resides in the cytoplasm. It catalyses the reaction alpha-D-galactose + ATP = alpha-D-galactose 1-phosphate + ADP + H(+). The protein operates within carbohydrate metabolism; galactose metabolism. Catalyzes the transfer of the gamma-phosphate of ATP to D-galactose to form alpha-D-galactose-1-phosphate (Gal-1-P). This is Galactokinase from Lactobacillus helveticus (Lactobacillus suntoryeus).